A 217-amino-acid polypeptide reads, in one-letter code: UPF0323 lipoprotein HPP12_0232 (217 aa).

The first 27 residues, 1–27, serve as a signal peptide directing secretion; it reads MKKPYRKISDYAIVGGLSALVMVSIVG. Cysteine 28 carries the N-palmitoyl cysteine lipid modification. Cysteine 28 carries S-diacylglycerol cysteine lipidation. Over residues 160–171 the composition is skewed to polar residues; that stretch reads QRTYKSPQAYQR. A disordered region spans residues 160 to 217; that stretch reads QRTYKSPQAYQRSQNSFSKSAPSASSMGTASKGQSGFFGSSRPTSSPAISSGTRGFNS. Positions 172–185 are enriched in low complexity; it reads SQNSFSKSAPSASS. Polar residues predominate over residues 186 to 197; the sequence is MGTASKGQSGFF. The span at 199–210 shows a compositional bias: low complexity; the sequence is SSRPTSSPAISS.

Belongs to the UPF0323 family.

The protein resides in the cell membrane. The sequence is that of UPF0323 lipoprotein HPP12_0232 from Helicobacter pylori (strain P12).